The following is a 155-amino-acid chain: Ribosome maturation factor RimP (155 aa).

This sequence belongs to the RimP family.

The protein localises to the cytoplasm. Functionally, required for maturation of 30S ribosomal subunits. The polypeptide is Ribosome maturation factor RimP (Staphylococcus aureus (strain bovine RF122 / ET3-1)).